Consider the following 311-residue polypeptide: Ornithine carbamoyltransferase (311 aa).

Carbamoyl phosphate contacts are provided by residues 54 to 58 (STRTR), asparagine 81, arginine 104, and 131 to 134 (HPCQ). L-ornithine contacts are provided by residues asparagine 164, aspartate 225, and 229–230 (DM). Carbamoyl phosphate-binding positions include 268–271 (HDMP), threonine 279, and arginine 297.

The protein belongs to the aspartate/ornithine carbamoyltransferase superfamily. OTCase family.

It is found in the cytoplasm. The enzyme catalyses carbamoyl phosphate + L-ornithine = L-citrulline + phosphate + H(+). It participates in amino-acid biosynthesis; L-arginine biosynthesis; L-arginine from L-ornithine and carbamoyl phosphate: step 1/3. In terms of biological role, reversibly catalyzes the transfer of the carbamoyl group from carbamoyl phosphate (CP) to the N(epsilon) atom of ornithine (ORN) to produce L-citrulline. This chain is Ornithine carbamoyltransferase (argF), found in Leptospira interrogans serogroup Icterohaemorrhagiae serovar copenhageni (strain Fiocruz L1-130).